A 597-amino-acid chain; its full sequence is Kelch-like protein 21 (597 aa).

One can recognise a BTB domain in the interval 35-103 (LDVTLEAAGG…SYTGRVAVSG (69 aa)). The region spanning 138 to 239 (CLDMQDFAEA…RRFYLLAHVE (102 aa)) is the BACK domain. 6 Kelch repeats span residues 287–335 (ILVL…ALGN), 336–382 (DIYV…VLDG), 384–422 (LYVV…ACRG), 423–470 (RLYA…TLNG), 472–512 (MYFV…VLGG), and 513–560 (KLYV…SIFR). The disordered stretch occupies residues 570-597 (GRGFELNSGSNDVDAGYHRLPQNPEELH).

Component of the BCR(KLHL21) E3 ubiquitin ligase complex, at least composed of CUL3, KLHL21 and RBX1.

It is found in the cytoplasm. It localises to the cytoskeleton. The protein resides in the spindle. It participates in protein modification; protein ubiquitination. Functionally, substrate-specific adapter of a BCR (BTB-CUL3-RBX1) E3 ubiquitin-protein ligase complex required for efficient chromosome alignment and cytokinesis. The BCR(KLHL21) E3 ubiquitin ligase complex regulates localization of the chromosomal passenger complex (CPC) from chromosomes to the spindle midzone in anaphase and mediates the ubiquitination of AURKB. Ubiquitination of AURKB by BCR(KLHL21) E3 ubiquitin ligase complex may not lead to its degradation by the proteasome. In Mus musculus (Mouse), this protein is Kelch-like protein 21 (Klhl21).